The chain runs to 1284 residues: A-type inclusion protein A25 homolog (1284 aa).

The disordered stretch occupies residues 340 to 383 (KPITNTGIEEPHATGGDKEEQEQQPVKVVQSKPDDGITPYNPFE). Positions 348 to 357 (EEPHATGGDK) are enriched in basic and acidic residues. 10 tandem repeats follow at residues 611 to 637 (VRRE…RNQE), 638 to 665 (DTQE…SGGG), 666 to 689 (NLTE…ECRG), 690 to 720 (NATE…NNAD), 721 to 751 (TERE…SNAD), 752 to 780 (MERE…GNGT), 781 to 811 (SSEE…ELYS), 812 to 842 (AYKS…KTDS), 843 to 871 (YYRR…TNHA), and 872 to 912 (KYID…REIE). The interval 611–912 (VRRELEEERR…DMDQYKREIE (302 aa)) is 10 X approximate tandem repeats. The tract at residues 1169 to 1234 (PLTTEDTEPK…PPKPETPQIS (66 aa)) is disordered. The segment covering 1180 to 1192 (VEVVPPSSDVTEP) has biased composition (low complexity). The span at 1211-1221 (SEYQTSVSQVA) shows a compositional bias: polar residues.

Belongs to the poxviridae A25 protein family. Interacts (via N-terminus) with protein A26.

The protein resides in the virion. Its function is as follows. Structural protein that forms a matrix surrounding the mature virion (MV) through interaction with protein A26. Presence of protein A25 in the virion structurally prevents direct virus-cell fusion mechanism. This chain is A-type inclusion protein A25 homolog (ATI), found in Apodemus sylvaticus (European woodmouse).